We begin with the raw amino-acid sequence, 173 residues long: Crossover junction endodeoxyribonuclease RuvC (173 aa).

Active-site residues include D8, E67, and D139. D8, E67, and D139 together coordinate Mg(2+).

It belongs to the RuvC family. In terms of assembly, homodimer which binds Holliday junction (HJ) DNA. The HJ becomes 2-fold symmetrical on binding to RuvC with unstacked arms; it has a different conformation from HJ DNA in complex with RuvA. In the full resolvosome a probable DNA-RuvA(4)-RuvB(12)-RuvC(2) complex forms which resolves the HJ. The cofactor is Mg(2+).

It is found in the cytoplasm. The enzyme catalyses Endonucleolytic cleavage at a junction such as a reciprocal single-stranded crossover between two homologous DNA duplexes (Holliday junction).. In terms of biological role, the RuvA-RuvB-RuvC complex processes Holliday junction (HJ) DNA during genetic recombination and DNA repair. Endonuclease that resolves HJ intermediates. Cleaves cruciform DNA by making single-stranded nicks across the HJ at symmetrical positions within the homologous arms, yielding a 5'-phosphate and a 3'-hydroxyl group; requires a central core of homology in the junction. The consensus cleavage sequence is 5'-(A/T)TT(C/G)-3'. Cleavage occurs on the 3'-side of the TT dinucleotide at the point of strand exchange. HJ branch migration catalyzed by RuvA-RuvB allows RuvC to scan DNA until it finds its consensus sequence, where it cleaves and resolves the cruciform DNA. The polypeptide is Crossover junction endodeoxyribonuclease RuvC (Photorhabdus laumondii subsp. laumondii (strain DSM 15139 / CIP 105565 / TT01) (Photorhabdus luminescens subsp. laumondii)).